Consider the following 340-residue polypeptide: L-threonine 3-dehydrogenase (340 aa).

Residue cysteine 38 participates in Zn(2+) binding. Catalysis depends on charge relay system residues threonine 40 and histidine 43. Positions 63, 64, 93, 96, 99, and 107 each coordinate Zn(2+). Residues isoleucine 175, aspartate 195, arginine 200, 261 to 263, and 285 to 286 each bind NAD(+); these read LGI and IY.

Belongs to the zinc-containing alcohol dehydrogenase family. As to quaternary structure, homotetramer. It depends on Zn(2+) as a cofactor.

It localises to the cytoplasm. The enzyme catalyses L-threonine + NAD(+) = (2S)-2-amino-3-oxobutanoate + NADH + H(+). Its pathway is amino-acid degradation; L-threonine degradation via oxydo-reductase pathway; glycine from L-threonine: step 1/2. Its function is as follows. Catalyzes the NAD(+)-dependent oxidation of L-threonine to 2-amino-3-ketobutyrate. The polypeptide is L-threonine 3-dehydrogenase (Xanthomonas axonopodis pv. citri (strain 306)).